A 388-amino-acid chain; its full sequence is Chorismate synthase (388 aa).

Residues arginine 39 and arginine 45 each coordinate NADP(+). Residues 130-132 (RSS), 251-252 (NA), glycine 296, 311-315 (KPIPT), and arginine 337 contribute to the FMN site.

Belongs to the chorismate synthase family. Homotetramer. Requires FMNH2 as cofactor.

The enzyme catalyses 5-O-(1-carboxyvinyl)-3-phosphoshikimate = chorismate + phosphate. It functions in the pathway metabolic intermediate biosynthesis; chorismate biosynthesis; chorismate from D-erythrose 4-phosphate and phosphoenolpyruvate: step 7/7. Functionally, catalyzes the anti-1,4-elimination of the C-3 phosphate and the C-6 proR hydrogen from 5-enolpyruvylshikimate-3-phosphate (EPSP) to yield chorismate, which is the branch point compound that serves as the starting substrate for the three terminal pathways of aromatic amino acid biosynthesis. This reaction introduces a second double bond into the aromatic ring system. This chain is Chorismate synthase, found in Streptococcus pyogenes serotype M49 (strain NZ131).